A 261-amino-acid polypeptide reads, in one-letter code: Cytochrome c oxidase subunit 3 (261 aa).

The Mitochondrial matrix segment spans residues 1 to 15; the sequence is MTHQAHAYHMVDPSP. A helical membrane pass occupies residues 16–34; it reads WPLTGAVAALLMTSGLAVW. The Mitochondrial intermembrane portion of the chain corresponds to 35 to 40; the sequence is FHFHST. The chain crosses the membrane as a helical span at residues 41–66; sequence TLMALGTVLLLLTMYQWWRDIIREGT. Over 67–72 the chain is Mitochondrial matrix; that stretch reads FQGHHT. The helical transmembrane segment at 73–105 threads the bilayer; sequence PPVQKGLRYGMILFITSEVFFFLGFFWAFYHAS. Residues 106–128 lie on the Mitochondrial intermembrane side of the membrane; sequence LAPTPELGGCWPPTGITTLDPFE. A helical transmembrane segment spans residues 129-152; the sequence is VPLLNTAVLLASGVTVTWAHHSIM. Topologically, residues 153-155 are mitochondrial matrix; that stretch reads EGE. Residues 156–183 form a helical membrane-spanning segment; the sequence is RKQAIHSLTLTILLGFYFTFLQGLEYYD. The Mitochondrial intermembrane portion of the chain corresponds to 184–190; that stretch reads APFTIAD. The chain crosses the membrane as a helical span at residues 191 to 223; sequence GVYGSTFFVATGFHGLHVIIGSTFLAVCLLRQI. The Mitochondrial matrix segment spans residues 224–232; it reads RYHFTSEHH. A helical membrane pass occupies residues 233-256; it reads FGFEAAAWYWHFVDVVWLFLYISI. The Mitochondrial intermembrane segment spans residues 257 to 261; that stretch reads YWWGS.

The protein belongs to the cytochrome c oxidase subunit 3 family. As to quaternary structure, component of the cytochrome c oxidase (complex IV, CIV), a multisubunit enzyme composed of 14 subunits. The complex is composed of a catalytic core of 3 subunits MT-CO1, MT-CO2 and MT-CO3, encoded in the mitochondrial DNA, and 11 supernumerary subunits COX4I, COX5A, COX5B, COX6A, COX6B, COX6C, COX7A, COX7B, COX7C, COX8 and NDUFA4, which are encoded in the nuclear genome. The complex exists as a monomer or a dimer and forms supercomplexes (SCs) in the inner mitochondrial membrane with NADH-ubiquinone oxidoreductase (complex I, CI) and ubiquinol-cytochrome c oxidoreductase (cytochrome b-c1 complex, complex III, CIII), resulting in different assemblies (supercomplex SCI(1)III(2)IV(1) and megacomplex MCI(2)III(2)IV(2)).

It is found in the mitochondrion inner membrane. It catalyses the reaction 4 Fe(II)-[cytochrome c] + O2 + 8 H(+)(in) = 4 Fe(III)-[cytochrome c] + 2 H2O + 4 H(+)(out). In terms of biological role, component of the cytochrome c oxidase, the last enzyme in the mitochondrial electron transport chain which drives oxidative phosphorylation. The respiratory chain contains 3 multisubunit complexes succinate dehydrogenase (complex II, CII), ubiquinol-cytochrome c oxidoreductase (cytochrome b-c1 complex, complex III, CIII) and cytochrome c oxidase (complex IV, CIV), that cooperate to transfer electrons derived from NADH and succinate to molecular oxygen, creating an electrochemical gradient over the inner membrane that drives transmembrane transport and the ATP synthase. Cytochrome c oxidase is the component of the respiratory chain that catalyzes the reduction of oxygen to water. Electrons originating from reduced cytochrome c in the intermembrane space (IMS) are transferred via the dinuclear copper A center (CU(A)) of subunit 2 and heme A of subunit 1 to the active site in subunit 1, a binuclear center (BNC) formed by heme A3 and copper B (CU(B)). The BNC reduces molecular oxygen to 2 water molecules using 4 electrons from cytochrome c in the IMS and 4 protons from the mitochondrial matrix. The protein is Cytochrome c oxidase subunit 3 (mt-co3) of Gadus morhua (Atlantic cod).